Reading from the N-terminus, the 322-residue chain is MDSTIPVLGTELTPINGREETPCYKQTLSFTGLTCIVSLVALTGNAVVLWLLGCRMRRNAVSIYILNLVAADFLFLSGHIICSPLRLINIRHPISKILSPVMTFPYFIGLSMLSAISTERCLSILWPIWYHCRRPRYLSSVMCVLLWALSLLRSILEWMFCDFLFSGANSVWCETSDFITIAWLVFLCVVLCGSSLVLLVRILCGSRKMPLTRLYVTILLTVLVFLLCGLPFGIQWALFSRIHLDWKVLFCHVHLVSIFLSALNSSANPIIYFFVGSFRQRQNRQNLKLVLQRALQDTPEVDEGGGWLPQETLELSGSRLEQ.

The Extracellular portion of the chain corresponds to 1-31 (MDSTIPVLGTELTPINGREETPCYKQTLSFT). A helical membrane pass occupies residues 32–52 (GLTCIVSLVALTGNAVVLWLL). The Cytoplasmic segment spans residues 53-60 (GCRMRRNA). Residues 61–81 (VSIYILNLVAADFLFLSGHII) form a helical membrane-spanning segment. Residues 82–96 (CSPLRLINIRHPISK) are Extracellular-facing. The helical transmembrane segment at 97–117 (ILSPVMTFPYFIGLSMLSAIS) threads the bilayer. Over 118 to 140 (TERCLSILWPIWYHCRRPRYLSS) the chain is Cytoplasmic. Residues 141-161 (VMCVLLWALSLLRSILEWMFC) traverse the membrane as a helical segment. The Extracellular segment spans residues 162–177 (DFLFSGANSVWCETSD). A helical transmembrane segment spans residues 178-198 (FITIAWLVFLCVVLCGSSLVL). At 199 to 213 (LVRILCGSRKMPLTR) the chain is on the cytoplasmic side. A helical transmembrane segment spans residues 214 to 234 (LYVTILLTVLVFLLCGLPFGI). Residues 235-254 (QWALFSRIHLDWKVLFCHVH) are Extracellular-facing. A helical membrane pass occupies residues 255–275 (LVSIFLSALNSSANPIIYFFV). Residues 276 to 322 (GSFRQRQNRQNLKLVLQRALQDTPEVDEGGGWLPQETLELSGSRLEQ) lie on the Cytoplasmic side of the membrane.

It belongs to the G-protein coupled receptor 1 family. Mas subfamily. In terms of tissue distribution, uniquely localized in a subset of small dorsal root and trigeminal sensory neurons.

It localises to the cell membrane. Functionally, orphan receptor. Probably involved in the function of nociceptive neurons. May regulate nociceptor function and/or development, including the sensation or modulation of pain. Potently activated by enkephalins. The protein is Mas-related G-protein coupled receptor member X3 (MRGPRX3) of Homo sapiens (Human).